A 503-amino-acid chain; its full sequence is ATP synthase subunit alpha (503 aa).

171-178 (DRQTGKTA) serves as a coordination point for ATP.

This sequence belongs to the ATPase alpha/beta chains family. As to quaternary structure, F-type ATPases have 2 components, CF(1) - the catalytic core - and CF(0) - the membrane proton channel. CF(1) has five subunits: alpha(3), beta(3), gamma(1), delta(1), epsilon(1). CF(0) has four main subunits: a(1), b(1), b'(1) and c(9-12).

The protein resides in the cellular thylakoid membrane. The catalysed reaction is ATP + H2O + 4 H(+)(in) = ADP + phosphate + 5 H(+)(out). In terms of biological role, produces ATP from ADP in the presence of a proton gradient across the membrane. The alpha chain is a regulatory subunit. This Synechococcus sp. (strain PCC 6716) protein is ATP synthase subunit alpha.